Reading from the N-terminus, the 462-residue chain is Annexin A7 (462 aa).

The segment at Met1 to Pro130 is disordered. The segment at Gln7–Pro131 is 19 X 6 AA tandem repeats of Q-G-Y-P-P-Q. The segment covering Pro16–Pro130 has biased composition (low complexity). 4 Annexin repeats span residues His161–Thr232, Glu233–Glu304, Met315–Thr388, and Asn392–Ser462.

It belongs to the annexin family.

In terms of biological role, calcium/phospholipid-binding protein which promotes membrane fusion and is involved in exocytosis. This is Annexin A7 (nxnA) from Dictyostelium discoideum (Social amoeba).